A 40-amino-acid polypeptide reads, in one-letter code: Natriuretic peptide PpNP-a (40 aa).

A propeptide spanning residues 1–8 is cleaved from the precursor; that stretch reads SGSKTANI. A disordered region spans residues 1–40; sequence SGSKTANIGDGCFGVPIDHIGSTSGMGCGSPRPKPTPGGS. A disulfide bridge links C12 with C28.

Belongs to the natriuretic peptide family. As to expression, expressed by the venom gland.

The protein resides in the secreted. In terms of biological role, snake venom natriuretic peptide that targets both NPR1 and NPR2. Exhibits hypotensive and vasodepressor activities. This chain is Natriuretic peptide PpNP-a, found in Pseudechis porphyriacus (Red-bellied black snake).